Reading from the N-terminus, the 160-residue chain is Cyanate hydratase (160 aa).

Active-site residues include arginine 100, glutamate 103, and serine 126.

The protein belongs to the cyanase family.

The enzyme catalyses cyanate + hydrogencarbonate + 3 H(+) = NH4(+) + 2 CO2. In terms of biological role, catalyzes the reaction of cyanate with bicarbonate to produce ammonia and carbon dioxide. This Arthroderma otae (strain ATCC MYA-4605 / CBS 113480) (Microsporum canis) protein is Cyanate hydratase.